Consider the following 1070-residue polypeptide: DNA-directed RNA polymerase subunit beta (1070 aa).

The protein belongs to the RNA polymerase beta chain family. In terms of assembly, in plastids the minimal PEP RNA polymerase catalytic core is composed of four subunits: alpha, beta, beta', and beta''. When a (nuclear-encoded) sigma factor is associated with the core the holoenzyme is formed, which can initiate transcription.

The protein resides in the plastid. Its subcellular location is the chloroplast. It carries out the reaction RNA(n) + a ribonucleoside 5'-triphosphate = RNA(n+1) + diphosphate. Its function is as follows. DNA-dependent RNA polymerase catalyzes the transcription of DNA into RNA using the four ribonucleoside triphosphates as substrates. The sequence is that of DNA-directed RNA polymerase subunit beta from Nicotiana tomentosiformis (Tobacco).